An 837-amino-acid polypeptide reads, in one-letter code: Espin (837 aa).

9 ANK repeats span residues 1-31 (MALE…GPSL), 35-66 (LDAL…AVSR), 69-99 (NGAT…RVQE), 103-132 (SGAT…ANSA), 137-167 (TGAL…GVNA), 171-201 (NGAT…DPHL), 205-235 (DGMT…SFEQ), 238-267 (DGAT…EISQ), and 270-299 (WGGT…GLDV). Phosphoserine occurs at positions 337 and 341. The span at 339–348 (DPSMDLEAKQ) shows a compositional bias: basic and acidic residues. Disordered regions lie at residues 339–459 (DPSM…VGLH), 477–712 (DSLK…PATL), 745–767 (KLQQ…EARL), and 785–816 (EREQ…TLGY). Polar residues predominate over residues 351–364 (SGMSSPNTTMSVQP). Positions 376–395 (LSNYDSCSSSHSSSKGQRST) are enriched in low complexity. Phosphoserine occurs at positions 400 and 401. Positions 423 to 455 (SLPPPPPPSFPPPPPPGTQLPPPPPGYPAPNPP) are enriched in pro residues. Ser-497, Ser-504, and Ser-531 each carry phosphoserine. The segment covering 581 to 604 (LPPPPPPPPLPEALSSPPPAPPLP) has biased composition (pro residues). A compositionally biased stretch (low complexity) spans 617-626 (SSSSTGSTKS). Polar residues-rich tracts occupy residues 627–636 (FNMMSPTGDN) and 651–662 (PTPQSKGLTTVF). Residue Ser-631 is modified to Phosphoserine. Residues 635–652 (DNSELLAEIKAGKSLKPT) form the WH2 domain. Positions 663–673 (SGSGQPASQPE) are enriched in low complexity. A phosphoserine mark is found at Ser-670, Ser-674, and Ser-680. The stretch at 738 to 814 (KRQVMVRKLQ…KEQSEKLRTL (77 aa)) forms a coiled coil.

As to quaternary structure, monomer. Interacts with PFN2. Binds F-actin in a Ca(2+)-resistant fashion. Interacts (via N-terminal) with BAIAP2 (via SH3-domain). Interacts with MYO3A (via C-terminus). Interacts with MYO3B (via C-terminus). Expressed at high concentration in the microvillar parallel actin bundle (PAB) of hair cells stereocilia in the cochlea and vestibular system. Detected also at high levels of a number of other sensory cell types, including taste receptor cells, solitary chemoreceptor cells, vomeronasal sensory neurons and Merkel cells. Isoform 1 is detected in testis. Isoforms 2 is detected in small intestine and kidney (at protein level). Isoforms 3, 4, 6 and 8 are expressed in Purkinje cells dendritic spines.

The protein resides in the cytoplasm. It localises to the cytoskeleton. It is found in the cell projection. The protein localises to the stereocilium. Its subcellular location is the microvillus. The protein resides in the cell junction. It localises to the dendritic spine. Its function is as follows. Multifunctional actin-bundling protein. Plays a major role in regulating the organization, dimension, dynamics and signaling capacities of the actin filament-rich microvilli in the mechanosensory and chemosensory cells. Required for the assembly and stabilization of the stereociliary parallel actin bundles. Plays a crucial role in the formation and maintenance of inner ear hair cell stereocilia. Involved in the elongation of actin in stereocilia. In extrastriolar hair cells, required for targeting MYO3B to stereocilia tips, and for regulation of stereocilia diameter and staircase formation. The sequence is that of Espin (Espn) from Rattus norvegicus (Rat).